The following is a 375-amino-acid chain: MRVAIVAESFLPNVNGVTNSVLRVIDHLRRTGHEVLVIAPDTPRGQPPADRIHDGVRVHRVPSRMFPKITSLPLGVPRPRMIGVLRGFDPDVVHLASPALLGYGGLHAARHLGVPSVAVFQTDVAGFAESYGMGVASRAAWAWTRHLHSRADRTLAPSTSAMENLAAHRIPRVHRWGRGVDITGFVPSARDEHLRRTWSPDGRPIVGFVGRLAPEKHVERLAVLAARDDLQLVIVGDGVDRVKLQTVLPTAVFTGELRGAALAAAYASMDVFVHPGEHETFCQTVQEAMASGVPVIAPDAGGPRDLVAPCRTGLLLDVDGFECALPAAVTHLIAERRRYGIAARRSVLARTWPVVCDELIGHYEAVLGRRSLRAA.

It belongs to the glycosyltransferase group 1 family. Glycosyltransferase 4 subfamily.

Its pathway is phospholipid metabolism; phosphatidylinositol metabolism. Its function is as follows. Catalyzes the addition of a mannose residue from GDP-D-mannose to GlcAGroAc2 to generate 1,2-di-O-C16/C18:1-(alpha-D-mannopyranosyl)-(1-4)-(alpha-D-glucopyranosyluronic acid)-(1-3)-glycerol(ManGlcAGroAc2). The sequence is that of GDP-mannose-dependent alpha-mannosyltransferase (mgtA) from Mycolicibacterium smegmatis (strain ATCC 700084 / mc(2)155) (Mycobacterium smegmatis).